Consider the following 296-residue polypeptide: tRNA-cytidine(32) 2-sulfurtransferase (296 aa).

The PP-loop motif motif lies at 72 to 77 (SGGKDS). C147, C150, and C238 together coordinate [4Fe-4S] cluster.

Belongs to the TtcA family. Homodimer. Mg(2+) is required as a cofactor. Requires [4Fe-4S] cluster as cofactor.

It localises to the cytoplasm. The enzyme catalyses cytidine(32) in tRNA + S-sulfanyl-L-cysteinyl-[cysteine desulfurase] + AH2 + ATP = 2-thiocytidine(32) in tRNA + L-cysteinyl-[cysteine desulfurase] + A + AMP + diphosphate + H(+). Its pathway is tRNA modification. Functionally, catalyzes the ATP-dependent 2-thiolation of cytidine in position 32 of tRNA, to form 2-thiocytidine (s(2)C32). The sulfur atoms are provided by the cysteine/cysteine desulfurase (IscS) system. The sequence is that of tRNA-cytidine(32) 2-sulfurtransferase from Sinorhizobium fredii (strain NBRC 101917 / NGR234).